The following is a 550-amino-acid chain: Hydroxylamine reductase (550 aa).

[2Fe-2S] cluster-binding residues include Cys3, Cys6, Cys18, and Cys25. Hybrid [4Fe-2O-2S] cluster is bound by residues His249, Glu273, Cys317, Cys405, Cys433, Cys458, Glu492, and Lys494. Cys405 carries the cysteine persulfide modification.

This sequence belongs to the HCP family. The cofactor is [2Fe-2S] cluster. Hybrid [4Fe-2O-2S] cluster is required as a cofactor.

Its subcellular location is the cytoplasm. It catalyses the reaction A + NH4(+) + H2O = hydroxylamine + AH2 + H(+). Functionally, catalyzes the reduction of hydroxylamine to form NH(3) and H(2)O. This Salmonella typhimurium (strain LT2 / SGSC1412 / ATCC 700720) protein is Hydroxylamine reductase.